The following is a 604-amino-acid chain: Elongation factor 4 (604 aa).

The tr-type G domain maps to 2-184 (DHIRNFSIIA…AVITRMPAPR (183 aa)). GTP-binding positions include 14–19 (DHGKST) and 131–134 (NKMD).

It belongs to the TRAFAC class translation factor GTPase superfamily. Classic translation factor GTPase family. LepA subfamily.

The protein resides in the cell inner membrane. The catalysed reaction is GTP + H2O = GDP + phosphate + H(+). In terms of biological role, required for accurate and efficient protein synthesis under certain stress conditions. May act as a fidelity factor of the translation reaction, by catalyzing a one-codon backward translocation of tRNAs on improperly translocated ribosomes. Back-translocation proceeds from a post-translocation (POST) complex to a pre-translocation (PRE) complex, thus giving elongation factor G a second chance to translocate the tRNAs correctly. Binds to ribosomes in a GTP-dependent manner. This chain is Elongation factor 4, found in Methylibium petroleiphilum (strain ATCC BAA-1232 / LMG 22953 / PM1).